Here is a 118-residue protein sequence, read N- to C-terminus: Urease subunit beta (118 aa).

It belongs to the urease beta subunit family. Heterotrimer of UreA (gamma), UreB (beta) and UreC (alpha) subunits. Three heterotrimers associate to form the active enzyme.

Its subcellular location is the cytoplasm. It carries out the reaction urea + 2 H2O + H(+) = hydrogencarbonate + 2 NH4(+). Its pathway is nitrogen metabolism; urea degradation; CO(2) and NH(3) from urea (urease route): step 1/1. This is Urease subunit beta from Aliivibrio fischeri (strain MJ11) (Vibrio fischeri).